Reading from the N-terminus, the 317-residue chain is tRNA dimethylallyltransferase (317 aa).

Position 14–21 (14–21 (GPTASGKT)) interacts with ATP. Residue 16-21 (TASGKT) coordinates substrate. Interaction with substrate tRNA regions lie at residues 39–42 (DSAL), 163–167 (QRIQR), and 248–253 (RCVGYR).

The protein belongs to the IPP transferase family. As to quaternary structure, monomer. The cofactor is Mg(2+).

The catalysed reaction is adenosine(37) in tRNA + dimethylallyl diphosphate = N(6)-dimethylallyladenosine(37) in tRNA + diphosphate. In terms of biological role, catalyzes the transfer of a dimethylallyl group onto the adenine at position 37 in tRNAs that read codons beginning with uridine, leading to the formation of N6-(dimethylallyl)adenosine (i(6)A). The chain is tRNA dimethylallyltransferase from Paraburkholderia phymatum (strain DSM 17167 / CIP 108236 / LMG 21445 / STM815) (Burkholderia phymatum).